The primary structure comprises 150 residues: uncharacterized protein (150 aa).

The next 3 helical transmembrane spans lie at Leu48–Phe68, Val89–Pro109, and Arg123–Leu143.

The protein to M.pneumoniae MPN_085 central region.

The protein resides in the cell membrane. This is an uncharacterized protein from Mycoplasma pneumoniae (strain ATCC 29342 / M129 / Subtype 1) (Mycoplasmoides pneumoniae).